Here is a 244-residue protein sequence, read N- to C-terminus: uncharacterized protein (244 aa).

The next 6 helical transmembrane spans lie at 22–42 (IMLQFVAILFIVQSASALLSF), 63–83 (FIFSVAITQILTSFIAAWGLT), 110–130 (VILLDLLMVAPMLLGLGEAFA), 140–160 (IMSLIAMLVGVWFFVRLNLTV), 186–206 (GVLFIYTLLVYFLVPILIFQL), and 213–233 (AVFDMVIGIFTALLNIFMLVV).

The protein localises to the cell membrane. This is an uncharacterized protein from Haemophilus influenzae (strain ATCC 51907 / DSM 11121 / KW20 / Rd).